The following is a 346-amino-acid chain: N-acetyl-gamma-glutamyl-phosphate reductase (346 aa).

Residue Cys-150 is part of the active site.

It belongs to the NAGSA dehydrogenase family. Type 1 subfamily.

It is found in the cytoplasm. It catalyses the reaction N-acetyl-L-glutamate 5-semialdehyde + phosphate + NADP(+) = N-acetyl-L-glutamyl 5-phosphate + NADPH + H(+). It participates in amino-acid biosynthesis; L-arginine biosynthesis; N(2)-acetyl-L-ornithine from L-glutamate: step 3/4. Catalyzes the NADPH-dependent reduction of N-acetyl-5-glutamyl phosphate to yield N-acetyl-L-glutamate 5-semialdehyde. This chain is N-acetyl-gamma-glutamyl-phosphate reductase, found in Alkaliphilus metalliredigens (strain QYMF).